The sequence spans 250 residues: Small ribosomal subunit protein uS3 (250 aa).

In terms of domain architecture, KH type-2 spans 39–107 (VREFLTKNLK…PAQVSINEID (69 aa)). The tract at residues 215–250 (MNPAPAEERPAKRGRGRGEGQERRGRRGDRAADKGE) is disordered. Over residues 220-250 (AEERPAKRGRGRGEGQERRGRRGDRAADKGE) the composition is skewed to basic and acidic residues.

It belongs to the universal ribosomal protein uS3 family. In terms of assembly, part of the 30S ribosomal subunit. Forms a tight complex with proteins S10 and S14.

Binds the lower part of the 30S subunit head. Binds mRNA in the 70S ribosome, positioning it for translation. This chain is Small ribosomal subunit protein uS3, found in Acinetobacter baumannii (strain AB0057).